Here is a 198-residue protein sequence, read N- to C-terminus: FMN-dependent NADH:quinone oxidoreductase (198 aa).

An FMN-binding site is contributed by 96–99 (MYNF).

Belongs to the azoreductase type 1 family. In terms of assembly, homodimer. The cofactor is FMN.

It carries out the reaction 2 a quinone + NADH + H(+) = 2 a 1,4-benzosemiquinone + NAD(+). The enzyme catalyses N,N-dimethyl-1,4-phenylenediamine + anthranilate + 2 NAD(+) = 2-(4-dimethylaminophenyl)diazenylbenzoate + 2 NADH + 2 H(+). Functionally, quinone reductase that provides resistance to thiol-specific stress caused by electrophilic quinones. Its function is as follows. Also exhibits azoreductase activity. Catalyzes the reductive cleavage of the azo bond in aromatic azo compounds to the corresponding amines. The polypeptide is FMN-dependent NADH:quinone oxidoreductase (Burkholderia thailandensis (strain ATCC 700388 / DSM 13276 / CCUG 48851 / CIP 106301 / E264)).